A 70-amino-acid polypeptide reads, in one-letter code: DNA-directed RNA polymerase subunit omega (70 aa).

Belongs to the RNA polymerase subunit omega family. In terms of assembly, the RNAP catalytic core consists of 2 alpha, 1 beta, 1 beta' and 1 omega subunit. When a sigma factor is associated with the core the holoenzyme is formed, which can initiate transcription.

The enzyme catalyses RNA(n) + a ribonucleoside 5'-triphosphate = RNA(n+1) + diphosphate. In terms of biological role, promotes RNA polymerase assembly. Latches the N- and C-terminal regions of the beta' subunit thereby facilitating its interaction with the beta and alpha subunits. The protein is DNA-directed RNA polymerase subunit omega of Marinobacter nauticus (strain ATCC 700491 / DSM 11845 / VT8) (Marinobacter aquaeolei).